Here is a 370-residue protein sequence, read N- to C-terminus: UDP-3-O-acylglucosamine N-acyltransferase (370 aa).

The active-site Proton acceptor is H252. Positions 348–370 (NAAAEKRDGPAPNAASKATGDKV) are disordered.

The protein belongs to the transferase hexapeptide repeat family. LpxD subfamily. In terms of assembly, homotrimer.

The enzyme catalyses a UDP-3-O-[(3R)-3-hydroxyacyl]-alpha-D-glucosamine + a (3R)-hydroxyacyl-[ACP] = a UDP-2-N,3-O-bis[(3R)-3-hydroxyacyl]-alpha-D-glucosamine + holo-[ACP] + H(+). The protein operates within bacterial outer membrane biogenesis; LPS lipid A biosynthesis. Functionally, catalyzes the N-acylation of UDP-3-O-acylglucosamine using 3-hydroxyacyl-ACP as the acyl donor. Is involved in the biosynthesis of lipid A, a phosphorylated glycolipid that anchors the lipopolysaccharide to the outer membrane of the cell. The polypeptide is UDP-3-O-acylglucosamine N-acyltransferase (Paraburkholderia phytofirmans (strain DSM 17436 / LMG 22146 / PsJN) (Burkholderia phytofirmans)).